Consider the following 132-residue polypeptide: Protein C10 (132 aa).

Position 2 is an N-acetylalanine (A2).

The protein belongs to the UPF0456 family.

The protein localises to the cytoplasm. Functionally, in brain, may be required for corpus callosum development. The sequence is that of Protein C10 from Bos taurus (Bovine).